The sequence spans 507 residues: Cytochrome P450 7B1 (507 aa).

3 consecutive transmembrane segments (helical) span residues 14-34 (PLALLGLLFAATLLLSALFLL), 178-198 (IFAFCGSLVFEITFATLYGKI), and 287-307 (FLWASLANTIPAMFWAMYYIL). Cys-447 is a heme binding site.

Belongs to the cytochrome P450 family. Heme serves as cofactor. As to expression, highly expressed in brain structures including the corpus callosum, the anterior commissure and fornix. The hippocampal expression is particularly prominent in the dentate gyrus. Expressed in liver and kidney. The hepatic expression is sexually dimorphic, predominantly detected in male liver while barely detectable in females. Expressed in lymph nodes and spleens, in both lymphoid and stromal compartments. Higher expression is detected in fibroblastic reticular cells, a type of stromal cells in the lymph nodes. Also expressed at high levels in the outer follicle and at the B cell-T cell boundary of splenic germinal centers. Expressed in dendritic cells (DCs) subpopulations being most abundant in CD8-positive DCs.

The protein localises to the endoplasmic reticulum membrane. It localises to the microsome membrane. It carries out the reaction 25-hydroxycholesterol + reduced [NADPH--hemoprotein reductase] + O2 = 7alpha,25-dihydroxycholesterol + oxidized [NADPH--hemoprotein reductase] + H2O + H(+). It catalyses the reaction (25R)-cholest-5-ene-3beta,26-diol + reduced [NADPH--hemoprotein reductase] + O2 = (25R)-cholest-5-en-3beta,7alpha,26-triol + oxidized [NADPH--hemoprotein reductase] + H2O + H(+). The catalysed reaction is (24S)-hydroxycholesterol + reduced [NADPH--hemoprotein reductase] + O2 = (24S)-7alpha-dihydroxycholesterol + oxidized [NADPH--hemoprotein reductase] + H2O + H(+). The enzyme catalyses (24S)-25-epoxycholesterol + reduced [NADPH--hemoprotein reductase] + O2 = (24S,25)-epoxy-7alpha-hydroxycholesterol + oxidized [NADPH--hemoprotein reductase] + H2O + H(+). It carries out the reaction (22R)-hydroxycholesterol + reduced [NADPH--hemoprotein reductase] + O2 = (22R,7alpha)-dihydroxycholesterol + oxidized [NADPH--hemoprotein reductase] + H2O + H(+). It catalyses the reaction androst-5-en-3beta,17beta-diol + reduced [NADPH--hemoprotein reductase] + O2 = androst-5-en-3beta,7alpha,17beta-triol + oxidized [NADPH--hemoprotein reductase] + H2O + H(+). The catalysed reaction is 5alpha-androstane-3beta,17beta-diol + reduced [NADPH--hemoprotein reductase] + O2 = 5alpha-androstane-3beta,6alpha,17beta-triol + oxidized [NADPH--hemoprotein reductase] + H2O + H(+). The enzyme catalyses 3beta-hydroxyandrost-5-en-17-one + reduced [NADPH--hemoprotein reductase] + O2 = 3beta,7alpha-dihydroxyandrost-5-en-17-one + oxidized [NADPH--hemoprotein reductase] + H2O + H(+). It carries out the reaction 3beta-hydroxy-5alpha-androstan-17-one + reduced [NADPH--hemoprotein reductase] + O2 = 3beta,7alpha-dihydroxy-5alpha-androstan-17-one + oxidized [NADPH--hemoprotein reductase] + H2O + H(+). It catalyses the reaction pregnenolone + reduced [NADPH--hemoprotein reductase] + O2 = 7alpha-hydroxypregnenolone + oxidized [NADPH--hemoprotein reductase] + H2O + H(+). It participates in lipid metabolism; bile acid biosynthesis. It functions in the pathway steroid hormone biosynthesis. Inhibited by drugs voriconazole and metyrapone. Its function is as follows. A cytochrome P450 monooxygenase involved in the metabolism of endogenous oxysterols and steroid hormones, including neurosteroids. Mechanistically, uses molecular oxygen inserting one oxygen atom into a substrate, and reducing the second into a water molecule, with two electrons provided by NADPH via cytochrome P450 reductase (CPR; NADPH-ferrihemoprotein reductase). Catalyzes the hydroxylation of carbon hydrogen bonds of steroids with a preference for 7-alpha position. Usually metabolizes steroids carrying a hydroxy group at position 3, functioning as a 3-hydroxy steroid 7-alpha hydroxylase. Hydroxylates oxysterols, including 25-hydroxycholesterol and (25R)-cholest-5-ene-3beta,26-diol toward 7-alpha hydroxy derivatives, which may be transported to the liver and converted to bile acids. Via its product 7-alpha,25-dihydroxycholesterol, a ligand for the chemotactic G protein-coupled receptor GPR183/EBI2, regulates B cell migration in germinal centers of lymphoid organs, thus guiding efficient maturation of plasma B cells and overall antigen-specific humoral immune response. 7-alpha hydroxylates neurosteroids, including 3beta-hydroxyandrost-5-en-17-one (dehydroepiandrosterone) and pregnenolone, both involved in hippocampus-associated memory and learning. Metabolizes androstanoids toward 6- or 7-alpha hydroxy derivatives. The protein is Cytochrome P450 7B1 of Mus musculus (Mouse).